Here is a 757-residue protein sequence, read N- to C-terminus: Protein lsd90 (757 aa).

Polar residues-rich tracts occupy residues 1–11 (MVGTINESMQN), 19–36 (TAQSAKQGIKNAGQSSSK), 51–69 (TAGNTANDGDSSYASSKNL), and 94–118 (DTSNVSPPSTQTGGYASKDTTSTYE). Disordered regions lie at residues 1 to 131 (MVGT…SRSS), 224 to 244 (ERAREAQSSIERSASLREKQA), 589 to 633 (AQAE…KSKS), and 657 to 757 (AYVG…MSNK). Residues 166-604 (DEKTLQDLLE…KVESEYNSVK (439 aa)) adopt a coiled-coil conformation. Basic and acidic residues predominate over residues 589–598 (AQAEQSKVES). Positions 619–632 (VTTNEPTDVSTKSK) are enriched in polar residues. Low complexity predominate over residues 674 to 693 (STPSTLPTSASTNAAATTTT). 718–725 (GTTGLGKS) lines the ATP pocket.

May be involved in the metabolism of very long-chain fatty acid-containing phospholipids (VLCFA-PL). This is Protein lsd90 (lsd90) from Schizosaccharomyces pombe (strain 972 / ATCC 24843) (Fission yeast).